The sequence spans 205 residues: Suppressor of IKBKE 1 (205 aa).

Coiled-coil stretches lie at residues 4–32 and 154–192; these read TIDK…LIDQ and KAIQ…ESLR.

It belongs to the SIKE family. In terms of assembly, interacts with IKBKE and TBK1 via its coiled coil region. Interaction with TBK1 is disrupted upon viral infection or TLR3 stimulation. Interacts with CDC42BPB. Associates with the STRIPAK core complex composed of PP2A catalytic and scaffolding subunits, the striatins (PP2A regulatory subunits), the striatin-associated proteins MOB4, STRIP1 and STRIP2, PDCD10 and members of the STE20 kinases, such as STK24 and STK26.

It localises to the cytoplasm. Its function is as follows. Suppressor of IKK-epsilon. Associates with the striatin-interacting phosphatase and kinase (STRIPAK) core complex, forming the extended (SIKE1:SLMAP)STRIPAK complex. The (SIKE1:SLMAP)STRIPAK complex dephosphorylates STK3 leading to the inhibition of Hippo signaling and the control of cell growth. This chain is Suppressor of IKBKE 1 (sike1), found in Xenopus laevis (African clawed frog).